A 456-amino-acid polypeptide reads, in one-letter code: Multidrug resistance protein NorM (456 aa).

12 helical membrane-spanning segments follow: residues 11-31 (LIKL…MGFV), 53-73 (IWLP…PVVA), 92-112 (VVLA…TQFI), 126-146 (TVGY…FQTL), 159-179 (AMVI…IFVY), 189-209 (GVGC…LLLA), 242-262 (FPVA…ALLV), 268-288 (IIVA…MLPM), 314-334 (SRVG…ITVL), 356-376 (LLLF…AAGA), 385-405 (AIFN…GYIL), and 417-437 (AQGF…MLGV).

This sequence belongs to the multi antimicrobial extrusion (MATE) (TC 2.A.66.1) family.

It localises to the cell inner membrane. Multidrug efflux pump that functions as a Na(+)/drug antiporter. Confers resistance to several drugs, such as norfloxacin, ciprofloxacin, ethidium, kanamycin and streptomycin. The sequence is that of Multidrug resistance protein NorM (norM) from Vibrio parahaemolyticus serotype O3:K6 (strain RIMD 2210633).